The primary structure comprises 285 residues: Glycine--tRNA ligase alpha subunit (285 aa).

This sequence belongs to the class-II aminoacyl-tRNA synthetase family. Tetramer of two alpha and two beta subunits.

The protein localises to the cytoplasm. It catalyses the reaction tRNA(Gly) + glycine + ATP = glycyl-tRNA(Gly) + AMP + diphosphate. This chain is Glycine--tRNA ligase alpha subunit, found in Thermodesulfovibrio yellowstonii (strain ATCC 51303 / DSM 11347 / YP87).